Consider the following 367-residue polypeptide: Secondary metabolism regulator laeA (367 aa).

Residues 1 to 82 (MFGQQQQQQP…PETYPGHEEN (82 aa)) form a disordered region. Residues 19–41 (LNHNSRWTPPNESAQPRRSSNAM) are compositionally biased toward polar residues. Basic and acidic residues-rich tracts occupy residues 47-56 (TDRDPAEGHP) and 71-82 (KSPETYPGHEEN).

It belongs to the methyltransferase superfamily. LaeA methyltransferase family. In terms of assembly, component of the heterotrimeric velvet complex composed of laeA, veA and velB; VeA acting as a bridging protein between laeA and velB.

The protein resides in the nucleus. The enzyme catalyses L-methionyl-[protein] + S-adenosyl-L-methionine = S-methyl-L-methionyl-[protein] + S-adenosyl-L-homocysteine. In terms of biological role, methyltransferase that performs automethylation. No other methyl-accepting substrate has been identified yet. Component of the velvet transcription factor complex that acts as a global regulator for secondary metabolite gene expression. Controls the expression of the monacolin K gene clusters. Also regulates pigmentation. The protein is Secondary metabolism regulator laeA of Monascus pilosus (Red mold).